The following is a 91-amino-acid chain: Long neurotoxin OH-57 (91 aa).

A signal peptide spans 1–21 (MKTLLLTLVVVTIVCLDLGYT). 5 disulfides stabilise this stretch: Cys-24/Cys-41, Cys-34/Cys-62, Cys-47/Cys-51, Cys-66/Cys-77, and Cys-78/Cys-83.

The protein belongs to the three-finger toxin family. Long-chain subfamily. Type II alpha-neurotoxin sub-subfamily. As to expression, expressed by the venom gland.

It localises to the secreted. In terms of biological role, binds with high affinity to muscular (alpha-1/CHRNA1) and neuronal (alpha-7/CHRNA7) nicotinic acetylcholine receptor (nAChR) and inhibits acetylcholine from binding to the receptor, thereby impairing neuromuscular and neuronal transmission. In Ophiophagus hannah (King cobra), this protein is Long neurotoxin OH-57.